Consider the following 358-residue polypeptide: Methylthioribose-1-phosphate isomerase (358 aa).

Residues 54 to 56 (RGA), R96, and Q205 each bind substrate. D246 functions as the Proton donor in the catalytic mechanism. Substrate is bound at residue 256–257 (NK).

This sequence belongs to the eIF-2B alpha/beta/delta subunits family. MtnA subfamily.

It catalyses the reaction 5-(methylsulfanyl)-alpha-D-ribose 1-phosphate = 5-(methylsulfanyl)-D-ribulose 1-phosphate. It participates in amino-acid biosynthesis; L-methionine biosynthesis via salvage pathway; L-methionine from S-methyl-5-thio-alpha-D-ribose 1-phosphate: step 1/6. Catalyzes the interconversion of methylthioribose-1-phosphate (MTR-1-P) into methylthioribulose-1-phosphate (MTRu-1-P). The chain is Methylthioribose-1-phosphate isomerase from Pseudomonas aeruginosa (strain UCBPP-PA14).